A 352-amino-acid chain; its full sequence is Putative formin-like protein 15b (352 aa).

Residues Met-1–Lys-350 form the FH2 domain.

Belongs to the formin-like family. Class-II subfamily.

This Arabidopsis thaliana (Mouse-ear cress) protein is Putative formin-like protein 15b (FH15B).